A 627-amino-acid chain; its full sequence is 1-deoxy-D-xylulose-5-phosphate synthase (627 aa).

Residues H80 and 121–123 (GHS) each bind thiamine diphosphate. D152 is a Mg(2+) binding site. Thiamine diphosphate-binding positions include 153–154 (GA), N181, Y288, and E370. N181 lines the Mg(2+) pocket.

This sequence belongs to the transketolase family. DXPS subfamily. In terms of assembly, homodimer. It depends on Mg(2+) as a cofactor. Requires thiamine diphosphate as cofactor.

The enzyme catalyses D-glyceraldehyde 3-phosphate + pyruvate + H(+) = 1-deoxy-D-xylulose 5-phosphate + CO2. It functions in the pathway metabolic intermediate biosynthesis; 1-deoxy-D-xylulose 5-phosphate biosynthesis; 1-deoxy-D-xylulose 5-phosphate from D-glyceraldehyde 3-phosphate and pyruvate: step 1/1. Its function is as follows. Catalyzes the acyloin condensation reaction between C atoms 2 and 3 of pyruvate and glyceraldehyde 3-phosphate to yield 1-deoxy-D-xylulose-5-phosphate (DXP). This Aliivibrio fischeri (strain MJ11) (Vibrio fischeri) protein is 1-deoxy-D-xylulose-5-phosphate synthase.